A 425-amino-acid polypeptide reads, in one-letter code: Potassium/proton antiporter CemA (425 aa).

Residues 89–109 (LFLTTVKCLFILLFVPLGINF) traverse the membrane as a helical segment. An insert region spans residues 159–278 (LSENQIFFGL…KTDFASVFRT (120 aa)). The interval 173 to 192 (STFPSSEKSQKSEHFSNQDE) is disordered. The segment covering 180-192 (KSQKSEHFSNQDE) has biased composition (basic and acidic residues). 3 helical membrane passes run 300-320 (IEAI…CYLL), 350-370 (ILFI…ELFF), and 386-406 (IFLL…YLIF).

This sequence belongs to the CemA family.

It is found in the plastid. The protein localises to the chloroplast inner membrane. The catalysed reaction is K(+)(in) + H(+)(out) = K(+)(out) + H(+)(in). Contributes to K(+)/H(+) antiport activity by supporting proton efflux to control proton extrusion and homeostasis in chloroplasts in a light-dependent manner to modulate photosynthesis. Prevents excessive induction of non-photochemical quenching (NPQ) under continuous-light conditions. Indirectly promotes efficient inorganic carbon uptake into chloroplasts. This Tetradesmus obliquus (Green alga) protein is Potassium/proton antiporter CemA.